We begin with the raw amino-acid sequence, 978 residues long: Monofunctional C1-tetrahydrofolate synthase, mitochondrial (978 aa).

Low complexity predominate over residues 1–10 (MGTRLPLVLR). The transit peptide at 1–31 (MGTRLPLVLRQLRRPPQPPGPPRRLRVPCRA) directs the protein to the mitochondrion. The interval 1-71 (MGTRLPLVLR…SPGGRTPAAR (71 aa)) is disordered. Positions 31-348 (ASSGGGGGGG…REQQHRRWRL (318 aa)) are methylenetetrahydrofolate dehydrogenase and cyclohydrolase. Positions 33 to 45 (SGGGGGGGGGREG) are enriched in gly residues. Residue Lys189 is modified to N6-acetyllysine; alternate. Lys189 bears the N6-succinyllysine; alternate mark. The formyltetrahydrofolate synthetase stretch occupies residues 349–978 (HCLKLQPLSP…TETEQVKGLF (630 aa)). Position 357 is a phosphoserine (Ser357). 423-430 (TPLGEGKS) lines the ATP pocket. The residue at position 596 (Lys596) is an N6-succinyllysine.

In the N-terminal section; belongs to the tetrahydrofolate dehydrogenase/cyclohydrolase family. It in the C-terminal section; belongs to the formate--tetrahydrofolate ligase family. In terms of assembly, homodimer. As to expression, detected in most tissues, highest expression found in placenta, thymus and brain. Low expression is found in liver and skeletal muscle. Up-regulated in colon adenocarcinoma.

It localises to the mitochondrion. It carries out the reaction (6S)-5,6,7,8-tetrahydrofolate + formate + ATP = (6R)-10-formyltetrahydrofolate + ADP + phosphate. It functions in the pathway one-carbon metabolism; tetrahydrofolate interconversion. Its function is as follows. May provide the missing metabolic reaction required to link the mitochondria and the cytoplasm in the mammalian model of one-carbon folate metabolism complementing thus the enzymatic activities of MTHFD2. This chain is Monofunctional C1-tetrahydrofolate synthase, mitochondrial, found in Homo sapiens (Human).